Reading from the N-terminus, the 245-residue chain is 2,3-bisphosphoglycerate-dependent phosphoglycerate mutase (245 aa).

Substrate-binding positions include 8–15 (RHGQSLWN), 21–22 (TG), arginine 60, 87–90 (ERHY), lysine 98, 114–115 (RR), and 183–184 (GN). The Tele-phosphohistidine intermediate role is filled by histidine 9. Glutamate 87 acts as the Proton donor/acceptor in catalysis.

Belongs to the phosphoglycerate mutase family. BPG-dependent PGAM subfamily.

It catalyses the reaction (2R)-2-phosphoglycerate = (2R)-3-phosphoglycerate. It participates in carbohydrate degradation; glycolysis; pyruvate from D-glyceraldehyde 3-phosphate: step 3/5. In terms of biological role, catalyzes the interconversion of 2-phosphoglycerate and 3-phosphoglycerate. The protein is 2,3-bisphosphoglycerate-dependent phosphoglycerate mutase of Bacillus cereus (strain B4264).